Consider the following 370-residue polypeptide: Cyclic AMP-responsive element-binding protein 3-like protein 4 (370 aa).

The required for transcriptional activation stretch occupies residues 1–55 (MELGCPELLEPPEDIFSTGSFLELGFNGPASKVPVTRGLQKSEPDDFLNLFIDPN). At 1–271 (MELGCPELLE…QTSSRAAQTS (271 aa)) the chain is on the cytoplasmic side. The disordered stretch occupies residues 61-85 (ETSPGRDSGVSEDPGSPAQQASSSP). Over residues 76 to 85 (SPAQQASSSP) the composition is skewed to low complexity. The region spanning 193–256 (ILKKIRRKIR…IFLMEQVRQL (64 aa)) is the bZIP domain. The tract at residues 195–234 (KKIRRKIRNKQSAQDSRRRKKEYLDGLESRVAACSEQNQK) is basic motif. Residues 235–256 (LQRKVQELERQNIFLMEQVRQL) form a leucine-zipper region. A helical; Signal-anchor for type II membrane protein membrane pass occupies residues 272–292 (TCVLILLFSLALIILPSFSPF). At 293 to 370 (QGQSEARPED…IRGMVHTDEM (78 aa)) the chain is on the lumenal side. N-linked (GlcNAc...) asparagine glycans are attached at residues N318 and N342.

This sequence belongs to the bZIP family. ATF subfamily. As to quaternary structure, binds DNA as a dimer. Forms a heterodimer with CREM isoform Tau. In terms of processing, controlled by regulated intramembrane proteolysis (RIP). Following ER stress a fragment containing the cytoplasmic transcription factor domain is released by proteolysis. The cleavage seems to be performed sequentially by site-1 and site-2 proteases (PS1 and PS2). PS1 cleavage may be suppressed by a determinant in the C-terminal region. In terms of tissue distribution, predominantly expressed at high levels in testis with isoform 2 being the predominant isoform. Specifically expressed in postmeiotic spermatids and accumulates in the mid/late stage (at protein level). Ubiquitously expressed at low levels.

Its subcellular location is the endoplasmic reticulum membrane. The protein resides in the cytoplasmic vesicle. The protein localises to the secretory vesicle. It localises to the acrosome inner membrane. It is found in the nucleus. Its function is as follows. Transcriptional activator that may play a role in the unfolded protein response of the testis. Proposed to be involved in spermiogenesis. May be involved in regulating the maturation of sperm head nuclei. Alternatively proposed to be a paternally delivered transcription factor that may function in early zygotic gene activation. Increases the binding of CREM isoform Tau with CRE. The CREM isoform Tau-CREB3L4 heterodimer functions through CRE but not through UPRE and may recruit HIRA to CRE to regulate histone exchange. The chain is Cyclic AMP-responsive element-binding protein 3-like protein 4 (Creb3l4) from Mus musculus (Mouse).